A 444-amino-acid polypeptide reads, in one-letter code: Xylose isomerase (444 aa).

Active-site residues include histidine 101 and aspartate 104. Mg(2+) contacts are provided by glutamate 232, glutamate 268, histidine 271, aspartate 296, aspartate 307, aspartate 309, and aspartate 339.

This sequence belongs to the xylose isomerase family. Homotetramer. It depends on Mg(2+) as a cofactor.

The protein localises to the cytoplasm. It carries out the reaction alpha-D-xylose = alpha-D-xylulofuranose. In Thermotoga maritima (strain ATCC 43589 / DSM 3109 / JCM 10099 / NBRC 100826 / MSB8), this protein is Xylose isomerase.